Reading from the N-terminus, the 564-residue chain is O-fucosyltransferase 6 (564 aa).

A helical; Signal-anchor for type II membrane protein transmembrane segment spans residues 17 to 37; that stretch reads LLPFICAVSGALLILFALLSI. Asn-95 and Asn-139 each carry an N-linked (GlcNAc...) asparagine glycan. Residue 277-279 participates in substrate binding; it reads HLR. An N-linked (GlcNAc...) asparagine glycan is attached at Asn-449. Residues 501-512 show a composition bias toward basic and acidic residues; it reads MDSRKFGKKEQK. A disordered region spans residues 501–542; sequence MDSRKFGKKEQKEDEDAELSSSETDYEEDQTDLQDRGLYNGT. Positions 513-532 are enriched in acidic residues; sequence EDEDAELSSSETDYEEDQTD. N-linked (GlcNAc...) asparagine glycosylation occurs at Asn-540.

The protein belongs to the glycosyltransferase GT106 family.

The protein resides in the membrane. Its pathway is glycan metabolism. The protein is O-fucosyltransferase 6 of Arabidopsis thaliana (Mouse-ear cress).